A 104-amino-acid chain; its full sequence is Hydrogen cyanide synthase subunit HcnA (104 aa).

A 2Fe-2S ferredoxin-type domain is found at A16–R97. Positions 60, 65, 68, and 81 each coordinate [2Fe-2S] cluster.

As to quaternary structure, heterotrimer of HcnA, HcnB and HcnC.

The protein localises to the cell membrane. The enzyme catalyses glycine + 2 A = hydrogen cyanide + 2 AH2 + CO2. Oxygen is necessary for cyanogenesis. Activated by succinate, glycine methyl ester, glucose and D,L-methionine in addition to glycine. Phenazine methosulfate, methylene blue, 2,6-dichlorophenolindophenol (DCIP) and ferricyanide can replace oxygen for the reaction. Inhibited by pyrrolnitrin and acriflavine at 1 mM concentration. Functionally, a three-component membrane-bound flavoenzyme that catalyzes the formation of hydrogen cyanide, a secondary metabolite, by transfer of electrons to a cyanide-resistant branch of the aerobic respiratory chain. The sequence is that of Hydrogen cyanide synthase subunit HcnA from Pseudomonas aeruginosa (strain ATCC 15692 / DSM 22644 / CIP 104116 / JCM 14847 / LMG 12228 / 1C / PRS 101 / PAO1).